Here is a 222-residue protein sequence, read N- to C-terminus: von Willebrand factor C domain-containing protein 2-like (222 aa).

The signal sequence occupies residues 1 to 21; that stretch reads MALHIHEACILLLVIPGLVTS. 2 VWFC domains span residues 51-110 and 114-172; these read KGCV…PECK and NFCE…PVCK.

As to quaternary structure, peripherally associated with AMPAR complex. AMPAR complex consists of an inner core made of 4 pore-forming GluA/GRIA proteins (GRIA1, GRIA2, GRIA3 and GRIA4) and 4 major auxiliary subunits arranged in a twofold symmetry. One of the two pairs of distinct binding sites is occupied either by CNIH2, CNIH3 or CACNG2, CACNG3. The other harbors CACNG2, CACNG3, CACNG4, CACNG8 or GSG1L. This inner core of AMPAR complex is complemented by outer core constituents binding directly to the GluA/GRIA proteins at sites distinct from the interaction sites of the inner core constituents. Outer core constituents include at least PRRT1, PRRT2, CKAMP44/SHISA9, FRRS1L and NRN1. The proteins of the inner and outer core serve as a platform for other, more peripherally associated AMPAR constituents, including VWC2L. Alone or in combination, these auxiliary subunits control the gating and pharmacology of the AMPAR complex and profoundly impact their biogenesis and protein processing. As to expression, predominantly expressed in the brain (at protein level). Also detected in bones, including femur and calvaria, heart, lung and kidney. Isoform 5 is predominant in lung and heart, compared to isoforms 1 and 3. Isoform 4 is expressed in femur and calvaria at higher levels than isoforms 1 and 5. Isoforms 1 and 4 are expressed at higher levels than isoform 5 in kidney and brain.

The protein resides in the secreted. It localises to the synapse. May play a role in neurogenesis. May promote matrix mineralization, but has been shown to weakly, but significantly inhibit BMP2 and BMP6 activity in a preosteoblastic cell line. The sequence is that of von Willebrand factor C domain-containing protein 2-like (Vwc2l) from Mus musculus (Mouse).